The sequence spans 445 residues: UPF0210 protein SEQ_0468 (445 aa).

This sequence belongs to the UPF0210 family. As to quaternary structure, homodimer.

The polypeptide is UPF0210 protein SEQ_0468 (Streptococcus equi subsp. equi (strain 4047)).